We begin with the raw amino-acid sequence, 180 residues long: Large ribosomal subunit protein uL6 (180 aa).

The protein belongs to the universal ribosomal protein uL6 family. As to quaternary structure, part of the 50S ribosomal subunit.

This protein binds to the 23S rRNA, and is important in its secondary structure. It is located near the subunit interface in the base of the L7/L12 stalk, and near the tRNA binding site of the peptidyltransferase center. In Borrelia turicatae (strain 91E135), this protein is Large ribosomal subunit protein uL6.